Reading from the N-terminus, the 274-residue chain is Thiamine kinase (274 aa).

This sequence belongs to the thiamine kinase family.

The catalysed reaction is thiamine + ATP = thiamine phosphate + ADP + H(+). The protein operates within cofactor biosynthesis; thiamine diphosphate biosynthesis; thiamine phosphate from thiamine: step 1/1. In terms of biological role, catalyzes the ATP-dependent phosphorylation of thiamine to thiamine phosphate. Is involved in thiamine salvage. The sequence is that of Thiamine kinase from Shigella sonnei (strain Ss046).